We begin with the raw amino-acid sequence, 231 residues long: Probable amino-acid ABC transporter permease protein y4tG (231 aa).

Transmembrane regions (helical) follow at residues 9–29, 32–52, 64–84, 86–106, 161–181, and 196–216; these read TGNG…MGLI, LQAA…FAVL, AAVL…FFLY, VLPE…ALGI, YLVS…VEML, and VPLS…SALV. Residues 28–217 enclose the ABC transmembrane type-1 domain; sequence LITTLQAAFL…LTIVASALVR (190 aa).

This sequence belongs to the binding-protein-dependent transport system permease family. HisMQ subfamily.

Its subcellular location is the cell inner membrane. Its function is as follows. Probably part of the binding-protein-dependent transport system y4tEFGH for an amino acid. Probably responsible for the translocation of the substrate across the membrane. This Sinorhizobium fredii (strain NBRC 101917 / NGR234) protein is Probable amino-acid ABC transporter permease protein y4tG.